Reading from the N-terminus, the 121-residue chain is Insertion element IS406 uncharacterized 13.3 kDa protein (121 aa).

The chain is Insertion element IS406 uncharacterized 13.3 kDa protein from Burkholderia multivorans (strain ATCC 17616 / 249).